The primary structure comprises 219 residues: LexA repressor (219 aa).

Residues 28 to 48 (RAEIAAELGFRSANAAEEHLQ) constitute a DNA-binding region (H-T-H motif). Residues Ser138 and Lys175 each act as for autocatalytic cleavage activity in the active site.

This sequence belongs to the peptidase S24 family. Homodimer.

It carries out the reaction Hydrolysis of Ala-|-Gly bond in repressor LexA.. Represses a number of genes involved in the response to DNA damage (SOS response), including recA and lexA. In the presence of single-stranded DNA, RecA interacts with LexA causing an autocatalytic cleavage which disrupts the DNA-binding part of LexA, leading to derepression of the SOS regulon and eventually DNA repair. In Herminiimonas arsenicoxydans, this protein is LexA repressor.